Reading from the N-terminus, the 719-residue chain is 2'-5'-oligoadenylate synthase 2 (719 aa).

Gly2 is lipidated: N-myristoyl glycine. 2 OAS domain regions span residues 11 to 335 (VPAQ…SWNV) and 343 to 683 (TPGH…WKVP). An N6-acetyllysine modification is found at Lys378. Residue Ser396 participates in ATP binding. Residues Asp408, Asp410, and Asp481 each coordinate Mg(2+). The ATP site is built by Arg544 and Lys547.

This sequence belongs to the 2-5A synthase family. As to quaternary structure, homodimer. Mg(2+) is required as a cofactor. In terms of processing, myristoylation is not essential for its activity. Glycosylated. Glycosylation is essential for its activity.

It localises to the cytoplasm. It is found in the perinuclear region. The enzyme catalyses 3 ATP = 5'-triphosphoadenylyl-(2'-&gt;5')-adenylyl-(2'-&gt;5')-adenosine + 2 diphosphate. With respect to regulation, produced as a latent enzyme which is activated by double stranded RNA (dsRNA) generated during the course of viral infection. The dsRNA activator must be at least 15 nucleotides long, and no modification of the 2'-hydroxyl group is tolerated. ssRNA or dsDNA do not act as activators. Strongly inhibited by copper, iron and zinc ions. Partially inhibited by cobalt and nickel ions. Interferon-induced, dsRNA-activated antiviral enzyme which plays a critical role in cellular innate antiviral response. Activated by detection of double stranded RNA (dsRNA): polymerizes higher oligomers of 2'-5'-oligoadenylates (2-5A) from ATP which then bind to the inactive monomeric form of ribonuclease L (RNASEL) leading to its dimerization and subsequent activation. Activation of RNASEL leads to degradation of cellular as well as viral RNA, resulting in the inhibition of protein synthesis, thus terminating viral replication. Can mediate the antiviral effect via the classical RNASEL-dependent pathway or an alternative antiviral pathway independent of RNASEL. In addition, it may also play a role in other cellular processes such as apoptosis, cell growth, differentiation and gene regulation. May act as a negative regulator of lactation, stopping lactation in virally infected mammary gland lobules, thereby preventing transmission of viruses to neonates. Non-infected lobules would not be affected, allowing efficient pup feeding during infection. The polypeptide is 2'-5'-oligoadenylate synthase 2 (Homo sapiens (Human)).